A 605-amino-acid polypeptide reads, in one-letter code: Leucine-rich repeat-containing protein 40 (605 aa).

The disordered stretch occupies residues 1–21 (MSRFKRGGKAPDPLSGFRAPK). LRR repeat units follow at residues 83 to 104 (DLTKLILASNKLQALSEDISLL), 106 to 127 (ALVVLDIHDNQIASLPCAIREL), 129 to 151 (NLQKLNISHNKIKQLPNELQHLQ), 152 to 173 (NLKSFLLQHNQLEELPDSIGHL), 175 to 196 (ILEELDVSNNCLRSVSSSVGQL), 198 to 219 (GLVKFNLSSNKLTALPTEIGKM), 221 to 242 (NLRQLDCTSNLLENVPASVAGM), 244 to 265 (SLEQLYLRQNKLTYLPELPFLT), 266 to 287 (KLKELHVGNNQIQTLGPEHLQN), 290 to 311 (SLSVLELRYNKLKVLPKEISLL), 313 to 335 (GLERLDLSNNDIGSLPDTLGSLP), 336 to 357 (NLKSLQLDGNPLRGIRRDILNK), 429 to 450 (PITTVNFSKNQLTEVPARIVEM), 453 to 475 (SVYDVNLGFNKISSISLNLCMLL), 476 to 497 (KLTHLDMRNNALASLPPEMEAL), 499 to 520 (RLQSIILSFNRFKHFPDVLYTI), 522 to 543 (NLETILISSNQIGSIDPIQLKK), 546 to 567 (KLSTLDLQNNDLLQIPPALGNC), and 569 to 590 (SLRALHLEGNPFRNPRATILAK).

The chain is Leucine-rich repeat-containing protein 40 (lrrc40) from Xenopus laevis (African clawed frog).